Here is a 93-residue protein sequence, read N- to C-terminus: Acylphosphatase (93 aa).

Residues 7–93 (RAHVFVSGTV…EGIDGFHIRR (87 aa)) enclose the Acylphosphatase-like domain. Active-site residues include R22 and N40.

Belongs to the acylphosphatase family.

The enzyme catalyses an acyl phosphate + H2O = a carboxylate + phosphate + H(+). The sequence is that of Acylphosphatase (acyP) from Haloquadratum walsbyi (strain DSM 16790 / HBSQ001).